Consider the following 236-residue polypeptide: 2,3,4,5-tetrahydropyridine-2,6-dicarboxylate N-acetyltransferase (236 aa).

This sequence belongs to the transferase hexapeptide repeat family. DapH subfamily.

The enzyme catalyses (S)-2,3,4,5-tetrahydrodipicolinate + acetyl-CoA + H2O = L-2-acetamido-6-oxoheptanedioate + CoA. Its pathway is amino-acid biosynthesis; L-lysine biosynthesis via DAP pathway; LL-2,6-diaminopimelate from (S)-tetrahydrodipicolinate (acetylase route): step 1/3. Functionally, catalyzes the transfer of an acetyl group from acetyl-CoA to tetrahydrodipicolinate. This chain is 2,3,4,5-tetrahydropyridine-2,6-dicarboxylate N-acetyltransferase, found in Listeria monocytogenes serotype 4b (strain CLIP80459).